We begin with the raw amino-acid sequence, 463 residues long: Stress-activated protein kinase jnk-1 (463 aa).

The segment covering 1–12 has biased composition (polar residues); the sequence is MEERLSTTSSYP. Positions 1 to 23 are disordered; it reads MEERLSTTSSYPSHPGRSVEEDH. The Protein kinase domain occupies 119 to 412; that stretch reads YQNLRLIGSG…ISVDDALRHP (294 aa). Residues 126 to 131 and lysine 148 each bind ATP; that span reads GSGAQG. The Proton acceptor role is filled by aspartate 244. Threonine 276 bears the Phosphothreonine mark. A TXY motif is present at residues 276 to 278; sequence TPY. Residue tyrosine 278 is modified to Phosphotyrosine.

The protein belongs to the protein kinase superfamily. CMGC Ser/Thr protein kinase family. MAP kinase subfamily. As to quaternary structure, binds to the scaffolding protein, unc-16. Unc-16 also binds other components of the JNK signaling pathway. Interacts with daf-16. Mg(2+) is required as a cofactor. Post-translationally, dually phosphorylated on Thr-276 and Tyr-278, which activates the enzyme. Expressed in most neurons, including nerve ring, head ganglions, dorsal and ventral nerve cords and tail ganglions. The Thr-276/Tyr-278 phosphorylated form is present in the nerve ring upon heat exposure.

It localises to the cytoplasm. The protein localises to the perikaryon. It is found in the cell projection. The protein resides in the axon. The catalysed reaction is L-seryl-[protein] + ATP = O-phospho-L-seryl-[protein] + ADP + H(+). It catalyses the reaction L-threonyl-[protein] + ATP = O-phospho-L-threonyl-[protein] + ADP + H(+). With respect to regulation, activated by threonine and tyrosine phosphorylation by either of the dual specificity kinases, jkk-1 and mek-1. Its function is as follows. Serine/threonine-protein kinase which responds to activation by environmental stress by phosphorylating a number of transcription factors such as daf-16, and thus regulates transcriptional activity. By phosphorylating daf-16, plays a role in daf-16 nuclear translocation in intestinal cells in response to environmental stresses such as heat and oxidative stresses. Downstream of jkk-1, may coordinate locomotion via type-D GABAergic motoneurons and regulates synaptic vesicle transport in conjunction with unc-16. Independently of jkk-1, may regulate some mechanosensory responses, such as response to touch. Independently of jkk-1 and downstream of mek-1, plays a role in resistance to heavy metals, such as Cu(2+) or Cd(2+). Regulates germline cell apoptosis in response to heavy metals such as Cu(2+) and arsenite. Required for dopaminergic CEP neuron degeneration in response to Mn(2+). Required for normal sleep bout quantity and arousal thresholds during the transition from the last larval stage to adulthood in well-fed animals. Downstream of jkk-1 but independently of mek-1, positively regulates lifespan. This chain is Stress-activated protein kinase jnk-1 (jnk-1), found in Caenorhabditis elegans.